We begin with the raw amino-acid sequence, 147 residues long: Hemoglobin subunit beta (147 aa).

Val-2 is subject to N-acetylvaline. Positions 3 to 147 (HLTGEEKSAV…VANALAHKYH (145 aa)) constitute a Globin domain. A Phosphothreonine modification is found at Thr-13. Position 45 is a phosphoserine (Ser-45). Position 60 is an N6-acetyllysine (Lys-60). A heme b-binding site is contributed by His-64. Position 83 is an N6-acetyllysine (Lys-83). Residue His-93 participates in heme b binding. Residue Cys-94 is modified to S-nitrosocysteine. The residue at position 145 (Lys-145) is an N6-acetyllysine.

This sequence belongs to the globin family. As to quaternary structure, heterotetramer of two alpha chains and two beta chains. In terms of tissue distribution, red blood cells.

In terms of biological role, involved in oxygen transport from the lung to the various peripheral tissues. This is Hemoglobin subunit beta (HBB) from Callithrix jacchus (White-tufted-ear marmoset).